Here is a 202-residue protein sequence, read N- to C-terminus: Large ribosomal subunit protein bL25 (202 aa).

Positions 1–21 (MSKESYELKAEARERVGKGSS) are disordered.

Belongs to the bacterial ribosomal protein bL25 family. CTC subfamily. Part of the 50S ribosomal subunit; part of the 5S rRNA/L5/L18/L25 subcomplex. Contacts the 5S rRNA. Binds to the 5S rRNA independently of L5 and L18.

In terms of biological role, this is one of the proteins that binds to the 5S RNA in the ribosome where it forms part of the central protuberance. The sequence is that of Large ribosomal subunit protein bL25 from Agrobacterium fabrum (strain C58 / ATCC 33970) (Agrobacterium tumefaciens (strain C58)).